We begin with the raw amino-acid sequence, 97 residues long: Na(+)/H(+) antiporter subunit F1 (97 aa).

A run of 3 helical transmembrane segments spans residues 3–23 (FKIF…AMLI), 35–55 (VVAL…FSIL), and 60–80 (YMLV…AVFS).

Belongs to the CPA3 antiporters (TC 2.A.63) subunit F family. May form a heterooligomeric complex that consists of seven subunits: mnhA1, mnhB1, mnhC1, mnhD1, mnhE1, mnhF1 and mnhG1.

Its subcellular location is the cell membrane. In terms of biological role, mnh complex is a Na(+)/H(+) antiporter involved in Na(+) excretion. In Staphylococcus epidermidis (strain ATCC 35984 / DSM 28319 / BCRC 17069 / CCUG 31568 / BM 3577 / RP62A), this protein is Na(+)/H(+) antiporter subunit F1 (mnhF1).